Consider the following 312-residue polypeptide: tRNA pseudouridine synthase B (312 aa).

The active-site Nucleophile is Asp47.

This sequence belongs to the pseudouridine synthase TruB family. Type 1 subfamily.

It carries out the reaction uridine(55) in tRNA = pseudouridine(55) in tRNA. In terms of biological role, responsible for synthesis of pseudouridine from uracil-55 in the psi GC loop of transfer RNAs. This chain is tRNA pseudouridine synthase B, found in Vibrio cholerae serotype O1 (strain M66-2).